The primary structure comprises 308 residues: Testis-specific Y-encoded protein 1 (308 aa).

The protein belongs to the nucleosome assembly protein (NAP) family. Phosphorylated. In terms of tissue distribution, specifically expressed in testicular tissues. Isoform 1 and isoform 2 are expressed in spermatogonia and spermatocytes. Found in early testicular carcinoma in situ, spermatogonial cells in testicular tissues of 46,X,Y female and in prostate cancer cell lines.

Its subcellular location is the cytoplasm. It localises to the nucleus. In terms of biological role, may be involved in sperm differentiation and proliferation. The sequence is that of Testis-specific Y-encoded protein 1 (TSPY1) from Homo sapiens (Human).